A 78-amino-acid polypeptide reads, in one-letter code: Defensin beta 136 (78 aa).

A signal peptide spans 1–21; sequence MNLCLSSLLFFLVILLPSGKG. Cystine bridges form between Cys-33–Cys-60, Cys-40–Cys-54, and Cys-44–Cys-61.

It belongs to the beta-defensin family.

Its subcellular location is the secreted. Functionally, host defense peptide that exhibits antimicrobial and antifungal activity. Exhibits antimicrobial activity against E.coli, S.aureus and C.albicans (in vitro). Has high lipopolysaccharide (LPS)-binding affinity, and may thereby be involved in immunoregulation through LPS neutralization. The sequence is that of Defensin beta 136 (DEFB136) from Pan troglodytes (Chimpanzee).